The sequence spans 161 residues: Type II secretion system protein M (161 aa).

Over 1–16 the chain is Cytoplasmic; sequence MHNLLALWQQRTRRER. A helical membrane pass occupies residues 17-36; the sequence is CLLLGMAVVLLIGLVYYTLW. The Periplasmic segment spans residues 37–161; that stretch reads QPWQNREAQW…TLVLERSDEK (125 aa).

This sequence belongs to the GSP M family. As to quaternary structure, type II secretion system is composed of four main components: the outer membrane complex, the inner membrane complex, the cytoplasmic secretion ATPase and the periplasm-spanning pseudopilus. Forms homodimers. Interacts with PulL/GspL. Interacts with PulE/GspE and PulF/GspF.

It is found in the cell inner membrane. Inner membrane component of the type II secretion system required for the energy-dependent secretion of extracellular factors such as proteases and toxins from the periplasm. Plays a role in the complex assembly and recruits PulL resulting in a stable complex in the inner membrane. Provides thus a link between the energy-providing PulE protein in the cytoplasm and the rest of the T2SS machinery. The polypeptide is Type II secretion system protein M (pulM) (Klebsiella pneumoniae).